Consider the following 92-residue polypeptide: Small ribosomal subunit protein uS19c (92 aa).

This sequence belongs to the universal ribosomal protein uS19 family.

It is found in the plastid. Its subcellular location is the chloroplast. Its function is as follows. Protein S19 forms a complex with S13 that binds strongly to the 16S ribosomal RNA. This is Small ribosomal subunit protein uS19c (rps19) from Guillardia theta (Cryptophyte).